Consider the following 339-residue polypeptide: Senescence-specific cysteine protease SAG39 (339 aa).

An N-terminal signal peptide occupies residues 1-23 (MAMAKALLFAILGCLCLCSAVLA). 3 cysteine pairs are disulfide-bonded: C144-C187, C178-C220, and C276-C328. The active site involves C147. Active-site residues include H282 and N303.

Belongs to the peptidase C1 family. Low expression in mature leaves.

It is found in the vacuole. Cysteine protease that may have a developmental senescence specific cell death function during apoptosis, heavy metal detoxification, and hypersensitive response. This Oryza sativa subsp. japonica (Rice) protein is Senescence-specific cysteine protease SAG39.